Consider the following 249-residue polypeptide: uncharacterized protein (249 aa).

The chain crosses the membrane as a helical span at residues 3 to 23; sequence WYWIGLLIVVVLFLLSAVRIV.

It belongs to the band 7/mec-2 family.

The protein localises to the membrane. This is an uncharacterized protein from Archaeoglobus fulgidus (strain ATCC 49558 / DSM 4304 / JCM 9628 / NBRC 100126 / VC-16).